Reading from the N-terminus, the 156-residue chain is V-type proton ATPase 16 kDa proteolipid subunit c (156 aa).

The Lumenal portion of the chain corresponds to M1–Y7. Residues G8–G30 form a helical membrane-spanning segment. Over T31–S52 the chain is Cytoplasmic. The chain crosses the membrane as a helical span at residues I53–I73. Residues A74–H92 are Lumenal-facing. A helical membrane pass occupies residues L93–G114. The Cytoplasmic portion of the chain corresponds to D115–R126. The chain crosses the membrane as a helical span at residues L127–L152. Topologically, residues Y153–Q156 are lumenal.

This sequence belongs to the V-ATPase proteolipid subunit family. V-ATPase is a heteromultimeric enzyme made up of two complexes: the ATP-hydrolytic V1 complex and the proton translocation V0 complex. The V1 complex consists of three catalytic AB heterodimers that form a heterohexamer, three peripheral stalks each consisting of EG heterodimers, one central rotor including subunits D and F, and the regulatory subunits C and H. The proton translocation complex V0 consists of the proton transport subunit a, a ring of proteolipid subunits c9c'', rotary subunit d, subunits e and f, and the accessory subunits VhaAC45 and ATP6AP2.

The protein resides in the membrane. In terms of biological role, proton-conducting pore forming subunit of the V0 complex of vacuolar(H+)-ATPase (V-ATPase), a multisubunit enzyme composed of a peripheral complex (V1) that hydrolyzes ATP and a membrane integral complex (V0) that translocates protons. V-ATPase is responsible for acidifying and maintaining the pH of intracellular compartments and in some cell types, is targeted to the plasma membrane, where it is responsible for acidifying the extracellular environment. This Manduca sexta (Tobacco hawkmoth) protein is V-type proton ATPase 16 kDa proteolipid subunit c (VHA16).